A 367-amino-acid polypeptide reads, in one-letter code: Methylthioribose-1-phosphate isomerase (367 aa).

D250 functions as the Proton donor in the catalytic mechanism.

The protein belongs to the eIF-2B alpha/beta/delta subunits family. MtnA subfamily.

It localises to the cytoplasm. The protein resides in the nucleus. The enzyme catalyses 5-(methylsulfanyl)-alpha-D-ribose 1-phosphate = 5-(methylsulfanyl)-D-ribulose 1-phosphate. It functions in the pathway amino-acid biosynthesis; L-methionine biosynthesis via salvage pathway; L-methionine from S-methyl-5-thio-alpha-D-ribose 1-phosphate: step 1/6. Its function is as follows. Catalyzes the interconversion of methylthioribose-1-phosphate (MTR-1-P) into methylthioribulose-1-phosphate (MTRu-1-P). In Hordeum vulgare (Barley), this protein is Methylthioribose-1-phosphate isomerase (IDI2).